A 461-amino-acid chain; its full sequence is B3 domain-containing protein REM9 (461 aa).

Residues 11 to 103 (NQHFFQPLLP…VFHVTALGPS (93 aa)) constitute a DNA-binding region (TF-B3 1). Positions 110 to 146 (PQSSRHEEGEESGENEISEKEGEENVQKESDKSSSDL) are disordered. Residues 126–143 (ISEKEGEENVQKESDKSS) show a composition bias toward basic and acidic residues. 2 DNA-binding regions (TF-B3) span residues 148-244 (CFSQ…CSRT) and 230-332 (LQKA…EQPS). The disordered stretch occupies residues 333–415 (FKAEDGRHKR…SGIEGNLQHT (83 aa)). Residues 384–394 (PKVEIREKIAE) are compositionally biased toward basic and acidic residues. The span at 400–415 (RASNKSSGIEGNLQHT) shows a compositional bias: polar residues.

It localises to the nucleus. This is B3 domain-containing protein REM9 (REM9) from Arabidopsis thaliana (Mouse-ear cress).